The primary structure comprises 710 residues: Assimilatory nitrate reductase catalytic subunit (710 aa).

The 4Fe-4S Mo/W bis-MGD-type domain maps to 19–77; sequence EKTYDTQCPFCSMQCKMQLVEQTIVTRKKYTAIGIDNPTTQGRLCIKGMNAHQHALNSS. Cysteine 26, cysteine 29, cysteine 33, and cysteine 63 together coordinate [4Fe-4S] cluster.

Belongs to the prokaryotic molybdopterin-containing oxidoreductase family. Requires [4Fe-4S] cluster as cofactor. The cofactor is Mo-bis(molybdopterin guanine dinucleotide).

Its pathway is nitrogen metabolism; nitrate reduction (denitrification); dinitrogen from nitrate: step 1/4. In terms of biological role, nitrate reductase is a key enzyme involved in the first step of nitrate assimilation in plants, fungi and bacteria. The protein is Assimilatory nitrate reductase catalytic subunit (nasC) of Bacillus subtilis (strain 168).